The primary structure comprises 207 residues: Claudin-11 (207 aa).

Residue Met-1 is a topological domain, cytoplasmic. The helical transmembrane segment at 2–22 (VATCLQVVGFVTSFVGWIGII) threads the bilayer. Topologically, residues 23–82 (VTTSTNDWVVTCGYTIPTCRKLDELGSKGLWADCVMATGLYHCKPLVDILILPGYVQACR) are extracellular. The helical transmembrane segment at 83–103 (ALMIAASVLGLPAILLLLTVL) threads the bilayer. Residues 104 to 122 (PCIRMGHEPGVAKYRRAQL) are Cytoplasmic-facing. Residues 123-143 (AGVMLVLVALCAMVATIWFPV) traverse the membrane as a helical segment. The Extracellular segment spans residues 144–157 (CAHRETTIVSFGYS). A helical transmembrane segment spans residues 158 to 178 (LYAGWIGAVLCLVGGCVIVCC). At 179-207 (AGDAQAFGENRFYYSSGSSSPTHAKSAHV) the chain is on the cytoplasmic side. Phosphoserine is present on residues Ser-193, Ser-194, Ser-197, and Ser-198.

This sequence belongs to the claudin family. Interacts with tetraspanin-3/TSPAN3. Interacts with OCLN.

Its subcellular location is the cell junction. The protein localises to the tight junction. The protein resides in the cell membrane. In terms of biological role, plays a major role in tight junction-specific obliteration of the intercellular space, through calcium-independent cell-adhesion activity. This chain is Claudin-11 (CLDN11), found in Bos taurus (Bovine).